Reading from the N-terminus, the 1011-residue chain is Unconventional myosin ID (1011 aa).

Positions 7 to 690 (AGVQDFVLLD…TLFALEHQRN (684 aa)) constitute a Myosin motor domain. ATP is bound at residue 100–107 (GESGAGKT). The interval 567-589 (MADLVVTLLKKEPFYVRCIKPND) is actin-binding. 2 IQ domains span residues 694–714 (PHIV…RNFK) and 716–736 (MKAA…SYVQ). In terms of domain architecture, TH1 spans 806 to 1007 (AGRRPYWGQA…EGNIIFEVPA (202 aa)).

Belongs to the TRAFAC class myosin-kinesin ATPase superfamily. Myosin family. In terms of assembly, binds to F-actin. Interacts with arm. Interacts with shg. Interacts with ds (via intracellular region). In the embryo, expressed in gastric caeca, midgut cells of the proventriculus, and in the mid and hindgut. In the larval gut brush border, expression is in the terminal web domain. In the adult gut brush border, expression remains in the web domain and has also moved into the microvilli. Also expressed at low levels in follicle cells during oogenesis.

It localises to the cytoplasm. It is found in the cell cortex. The protein resides in the cytoskeleton. The protein localises to the cell membrane. Its subcellular location is the cell junction. It localises to the adherens junction. It is found in the cell projection. Unconventional myosin that functions as actin-based motor protein with ATPase activity. Binds to membranes enriched in phosphatidylinositol 4-5-bisphosphate, and can glide along actin filaments when anchored to a lipid bilayer. Generates left-right asymmetry at the level of single cells, organs and the whole body via its interaction with the actin cytoskeleton, both in the embryo and the adult. Normal left-right asymmetry of the larval midgut and hindgut requires expression in the embryonic hindgut epithelium during a critical time period, 10 to 12.75 hours after egg laying. This period corresponds to a late stage of germband retraction, and precedes left-right asymmetric morphogenesis. Expression in segment H1 of the imaginal ring is required at 0 to 24 hours after pupation for changes of cell shape and orientation in the H2 segment, which then gives rise to normal, dextral looping of the adult hindgut. Required during a critical period, 126-132 hours after egg laying, for normal, dextral rotation of the adult male genitalia. Has a double role by promoting dextral rotation in the posterior compartment of segment A8 of the male genital disk, and in repressing sinistral looping in the anterior compartment. The protein is Unconventional myosin ID of Drosophila melanogaster (Fruit fly).